The primary structure comprises 411 residues: MTVPYYRDVPTGNALRNFFKIMLKRKGNLFTAIFKELCLFLGLYFLFMVIYRLVLPKSGGQREIRKIVENLLSHQEFTIPLEFLLGFFVSSVVDRWRKSLDSLAYIESCAHAVVIGFPPNSNGSDKNLLIRRTIIRYLVVSQILLYREISLKVRRRFKKLTILGKAKLLNQNEIDKLNKLECKHYDIYFLPISWALSLIEDKIDKENLANEFTILWGQIKEWQTKLSLLRNCDYIPIPLAYPQAVFLAVRCYFAVCVFTRQHLDRYDSKMHTWITFFPVLTTFQYIFMMGWMKVAEILLNPMGEDEDDFELNFIIDNNLKNGLDIVSGLCGNHRKLAEHEIENDCRPYYQTNEQDRKKNRAPPESLKNVEFKSFTMEKASKDSPMVVKSESVCCLRRRFNSSAKKHHDSKV.

A run of 4 helical transmembrane segments spans residues 30-50 (FTAI…FMVI), 73-93 (SHQE…SSVV), 235-255 (IPIP…YFAV), and 272-292 (TWIT…MGWM).

This sequence belongs to the anion channel-forming bestrophin (TC 1.A.46) family. Calcium-sensitive chloride channel subfamily. In terms of assembly, forms oligomers.

The protein resides in the cell membrane. In terms of biological role, forms chloride channels. The polypeptide is Bestrophin homolog 26 (best-26) (Caenorhabditis elegans).